The following is a 208-amino-acid chain: 3-demethoxyubiquinol 3-hydroxylase (208 aa).

Fe cation is bound by residues Glu57, Glu87, His90, Glu139, Glu171, and His174.

It belongs to the COQ7 family. Fe cation is required as a cofactor.

The protein resides in the cell membrane. The catalysed reaction is a 5-methoxy-2-methyl-3-(all-trans-polyprenyl)benzene-1,4-diol + AH2 + O2 = a 3-demethylubiquinol + A + H2O. It functions in the pathway cofactor biosynthesis; ubiquinone biosynthesis. Its function is as follows. Catalyzes the hydroxylation of 2-nonaprenyl-3-methyl-6-methoxy-1,4-benzoquinol during ubiquinone biosynthesis. This chain is 3-demethoxyubiquinol 3-hydroxylase, found in Nitrosomonas europaea (strain ATCC 19718 / CIP 103999 / KCTC 2705 / NBRC 14298).